Here is a 153-residue protein sequence, read N- to C-terminus: Transcriptional repressor NrdR (153 aa).

A zinc finger spans residues 3-34 (CPFCAHDDSQVKDSRPAEDNAAIRRRRQCSKC). Residues 49–139 (VTVVKSDDKR…VYRDFSEARD (91 aa)) form the ATP-cone domain.

Belongs to the NrdR family. The cofactor is Zn(2+).

Its function is as follows. Negatively regulates transcription of bacterial ribonucleotide reductase nrd genes and operons by binding to NrdR-boxes. In Erythrobacter litoralis (strain HTCC2594), this protein is Transcriptional repressor NrdR.